The sequence spans 120 residues: NAD(P)H-quinone oxidoreductase subunit 3, chloroplastic (120 aa).

A run of 3 helical transmembrane segments spans residues isoleucine 9–glycine 29, methionine 64–methionine 84, and valine 88–leucine 108.

Belongs to the complex I subunit 3 family. NDH is composed of at least 16 different subunits, 5 of which are encoded in the nucleus.

The protein resides in the plastid. Its subcellular location is the chloroplast thylakoid membrane. The enzyme catalyses a plastoquinone + NADH + (n+1) H(+)(in) = a plastoquinol + NAD(+) + n H(+)(out). The catalysed reaction is a plastoquinone + NADPH + (n+1) H(+)(in) = a plastoquinol + NADP(+) + n H(+)(out). NDH shuttles electrons from NAD(P)H:plastoquinone, via FMN and iron-sulfur (Fe-S) centers, to quinones in the photosynthetic chain and possibly in a chloroplast respiratory chain. The immediate electron acceptor for the enzyme in this species is believed to be plastoquinone. Couples the redox reaction to proton translocation, and thus conserves the redox energy in a proton gradient. The sequence is that of NAD(P)H-quinone oxidoreductase subunit 3, chloroplastic from Zea mays (Maize).